The sequence spans 111 residues: Ghrelin (111 aa).

Positions 1–26 (MRQMKRTAYIILLVCVLALWMDSVQA) are cleaved as a signal peptide. Polar residues predominate over residues 28–37 (SSFLSPSQRP). A disordered region spans residues 28 to 53 (SSFLSPSQRPQGKDKKPPRVGRRDSD). The O-decanoyl serine; alternate moiety is linked to residue S29. The O-hexanoyl serine; alternate moiety is linked to residue S29. S29 carries the O-octanoyl serine; alternate lipid modification. The segment covering 38–53 (QGKDKKPPRVGRRDSD) has biased composition (basic and acidic residues). At V47 the chain carries Valine amide. Positions 51–111 (DSDGILDLFM…DLLMDTPAKE (61 aa)) are cleaved as a propeptide — removed in mature form.

It belongs to the motilin family. Post-translationally, O-octanoylated by GOAT/MBOAT4. O-octanoylation or O-decanoylation is essential for activity. The O-decanoylated form ghrelin-21-C10 differs in the length of the carbon backbone of the carboxylic acid forming an ester bond with Ser-29. 44% of eel ghrelin is O-decanoylated. Highest levels in stomach and anterior intestine. Lower levels in posterior intestine, kidney and brain. Low levels in heart, head kidney and middle intestine.

It is found in the secreted. Functionally, ligand for growth hormone secretagogue receptor type 1 (GHSR). Induces the release of growth hormone from the pituitary. Has an appetite-stimulating effect, induces adiposity and stimulates gastric acid secretion. Involved in growth regulation. In Anguilla japonica (Japanese eel), this protein is Ghrelin (ghrl).